Reading from the N-terminus, the 656-residue chain is DNA ligase (656 aa).

NAD(+) is bound by residues 32 to 36 and 81 to 82; these read DAVYD and SL. The active-site N6-AMP-lysine intermediate is K112. 3 residues coordinate NAD(+): R133, E167, and K306. Zn(2+) contacts are provided by C400, C403, C416, and C421. The BRCT domain occupies 577 to 656; that stretch reads ESSSVFSNKT…ELLKRLKEFD (80 aa).

Belongs to the NAD-dependent DNA ligase family. LigA subfamily. Requires Mg(2+) as cofactor. Mn(2+) serves as cofactor.

It catalyses the reaction NAD(+) + (deoxyribonucleotide)n-3'-hydroxyl + 5'-phospho-(deoxyribonucleotide)m = (deoxyribonucleotide)n+m + AMP + beta-nicotinamide D-nucleotide.. Its function is as follows. DNA ligase that catalyzes the formation of phosphodiester linkages between 5'-phosphoryl and 3'-hydroxyl groups in double-stranded DNA using NAD as a coenzyme and as the energy source for the reaction. It is essential for DNA replication and repair of damaged DNA. The polypeptide is DNA ligase (Helicobacter pylori (strain Shi470)).